The following is a 138-amino-acid chain: Basic phospholipase A2 vaspin B chain (138 aa).

An N-terminal signal peptide occupies residues 1–16 (MRILWIVAVCLIGVEG). Intrachain disulfides connect Cys-42–Cys-131, Cys-44–Cys-60, Cys-59–Cys-111, Cys-65–Cys-138, Cys-66–Cys-104, Cys-73–Cys-97, and Cys-91–Cys-102. The Ca(2+) site is built by Tyr-43, Gly-45, and Gly-47. His-63 is a catalytic residue. Residue Asp-64 participates in Ca(2+) binding. The active site involves Asp-105.

This sequence belongs to the phospholipase A2 family. Group II subfamily. D49 sub-subfamily. As to quaternary structure, heterodimer of a weakly toxic basic protein having phospholipase A2 activity (B chain (AC Q8JFG1)) and a non-toxic acidic protein functioning as its inhibitor (A chain). Requires Ca(2+) as cofactor. As to expression, expressed by the venom gland.

Its subcellular location is the secreted. The catalysed reaction is a 1,2-diacyl-sn-glycero-3-phosphocholine + H2O = a 1-acyl-sn-glycero-3-phosphocholine + a fatty acid + H(+). In terms of biological role, heterodimer: postsynaptic neurotoxin. Functionally, monomer: snake venom phospholipase A2 (PLA2) that shows postsynaptic neurotoxicity. PLA2 catalyzes the calcium-dependent hydrolysis of the 2-acyl groups in 3-sn-phosphoglycerides. The sequence is that of Basic phospholipase A2 vaspin B chain from Vipera aspis aspis (Aspic viper).